Here is a 1216-residue protein sequence, read N- to C-terminus: MGKKQKNKSEDSTKDDTDLGALAAEIEGAGAAKEQEPQKGKGKKKKEKKKQDFDENDILRELEELSLEAQGIGADRDAATVKPTENNEEESASKQDKKKKGQKGKKTSFDENDSEELEDKDSKSKKPARPNSEVLLSGSEDADDPNKLSKKGKKAQKSTKKRDGSEEDEDNSKRSKERSRVNSSGESGGESDEFLQSRKGQKKNQKNKSVPTIDSGNEDDDSSFKIKTVAQKKAEKKERERKKREEEKAKLRKVKEKEELEKGRKEQSKQREPQKRPDEEVLVLRGTPDAGAASEEKGDIAATLEDDNEGDKKKKDKKKKKTEKDDKEKEKKKGPSKSTVKAIQEALAKLREEEERQKREEEERIKRLEELEAKRKEEERLEQEKRERKKQKEKERKERLKKEGKLLTKSQREARARAEVTLRHLQAQGVEVPSKDSLPKKRPVYEDKKKKKTPQQLESKEALETVEVSAPVEVVDQGVPEKEETPPSVDAEEDEETEDAGLDDWEAMASDEEREKEGNMIHIEVEENPEEEEEEEEDEDEEDSEDEEDEGDSEGSDGDEEDYKLSDEKDLGKAGDTKPNKDASSDSEYDSDDDRTKEERAYDKAKRRIEKRRLEHGKNVNTEKLRAPIICVLGHVDTGKTKILDKLRHTHVQDGEAGGITQQIGATNVPLEAINEQTKMIKNFDRENVRIPGMLIIDTPGHESFSNLRNRGSSLCDIAILVVDIMHGLEPQTIESINILKSKKCPFIVALNKIDRLYDWKKSPDSDVAVTLKKQKKNTKDEFEERAKAIIVEFAQQGLNAALFYENKDPRTFVSLVPTSAHTGDGMGSLIYLLVELTQTMLSKRLAHCEELRAQVMEVKALPGMGTTIDVILINGRLKEGDTIIVPGVEGPIVTQIRGLLLPPPMKELRVKNQYEKHKEVEAAQGVKILGKDLEKTLAGLPLLVAYKDDEIPVLKDELIHELKQTLNAIKLEEKGVYVQASTLGSLEALLEFLKTSEVPYAGINIGPVHKKDVMKASVMLEHDPQYAVILAFDVRIERDAQEMADSLGVRIFSAEIIYHLFDAFTKYRQDYKKQKQEEFKHIAVFPCKMKILPQYIFNSRDPIVIGVTVEAGQVKQGTPMCVPSKNFVDIGIVTSIEINHKQVDVAKKGQEVCVKIEPIPGESPKMFGRHFEATDILVSKISRQSIDALKDWFRDEMQKSDWQLIVELKKVFEII.

Residues 1–604 (MGKKQKNKSE…RTKEERAYDK (604 aa)) are disordered. Residues 7-17 (NKSEDSTKDDT) are compositionally biased toward basic and acidic residues. Over residues 19 to 32 (LGALAAEIEGAGAA) the composition is skewed to low complexity. Over residues 49 to 63 (KKQDFDENDILRELE) the composition is skewed to basic and acidic residues. S66 carries the post-translational modification Phosphoserine. The segment covering 96-106 (DKKKKGQKGKK) has biased composition (basic residues). T107 carries the phosphothreonine modification. Phosphoserine is present on residues S108, S114, S137, and S139. Over residues 110 to 119 (DENDSEELED) the composition is skewed to acidic residues. Basic residues predominate over residues 148 to 160 (LSKKGKKAQKSTK). Phosphoserine is present on residues S165, S172, S183, S184, S187, S191, S209, S215, and S223. A compositionally biased stretch (basic and acidic residues) spans 171–180 (NSKRSKERSR). Composition is skewed to basic and acidic residues over residues 232 to 279 (KKAE…RPDE), 322 to 333 (TEKDDKEKEKKK), 348 to 422 (AKLR…EVTL), and 433 to 448 (PSKDSLPKKRPVYEDK). S437 is subject to Phosphoserine. Residues 490–510 (DAEEDEETEDAGLDDWEAMAS) show a composition bias toward acidic residues. Position 497 is a phosphothreonine (T497). The span at 511–525 (DEEREKEGNMIHIEV) shows a compositional bias: basic and acidic residues. Acidic residues predominate over residues 526-562 (EENPEEEEEEEEDEDEEDSEDEEDEGDSEGSDGDEED). S544, S553, S556, S584, S585, S587, and S591 each carry phosphoserine. A compositionally biased stretch (basic and acidic residues) spans 563–584 (YKLSDEKDLGKAGDTKPNKDAS). A compositionally biased stretch (basic and acidic residues) spans 594 to 604 (DRTKEERAYDK). The 218-residue stretch at 625–842 (LRAPIICVLG…LLVELTQTML (218 aa)) folds into the tr-type G domain. A G1 region spans residues 634-641 (GHVDTGKT). Residues 636-642 (VDTGKTK) and 659-661 (GIT) contribute to the GTP site. The segment at 659-663 (GITQQ) is G2. The segment at 698–701 (DTPG) is G3. Residue H702 is part of the active site. Residues 752–753 (NK), 755–756 (DR), and 821–822 (AH) each bind GTP. The interval 752-755 (NKID) is G4. The segment at 820–822 (SAH) is G5. S1164 bears the Phosphoserine mark.

This sequence belongs to the TRAFAC class translation factor GTPase superfamily. Classic translation factor GTPase family. IF-2 subfamily. As to quaternary structure, interacts through its C-terminal domain (CTD) with the CTD of eIF1A (EIF1AX) or with the CTD of EIF5 (mutually exclusive) through a common binding site. Interacts with eIF1A (EIF1AX) from the location of the start codon by the 43S complex until the formation of the 80S complex. Interacts with ANXA5 in a calcium and phospholipid-dependent manner. A monovalent cation is required as a cofactor.

Its subcellular location is the cytoplasm. It catalyses the reaction GTP + H2O = GDP + phosphate + H(+). Plays a role in translation initiation. Ribosome-dependent GTPase that promotes the joining of the 60S ribosomal subunit to the pre-initiation complex to form the 80S initiation complex with the initiator methionine-tRNA in the P-site base paired to the start codon. Together with eIF1A (EIF1AX), actively orients the initiator methionine-tRNA in a conformation that allows 60S ribosomal subunit joining to form the 80S initiation complex. Is released after formation of the 80S initiation complex. Its GTPase activity is not essential for ribosomal subunits joining, but GTP hydrolysis is needed for eIF1A (EIF1AX) ejection quickly followed by EIF5B release to form elongation-competent ribosomes. In contrast to its procaryotic homolog, does not promote recruitment of Met-rRNA to the small ribosomal subunit. The chain is Eukaryotic translation initiation factor 5B (Eif5b) from Rattus norvegicus (Rat).